We begin with the raw amino-acid sequence, 527 residues long: T-complex protein 1 subunit delta (527 aa).

Belongs to the TCP-1 chaperonin family. As to quaternary structure, heterooligomeric complex of about 850 to 900 kDa that forms two stacked rings, 12 to 16 nm in diameter.

The protein localises to the cytoplasm. Functionally, molecular chaperone; assists the folding of proteins upon ATP hydrolysis. Known to play a role, in vitro, in the folding of actin and tubulin. This chain is T-complex protein 1 subunit delta (cct4), found in Schizosaccharomyces pombe (strain 972 / ATCC 24843) (Fission yeast).